We begin with the raw amino-acid sequence, 327 residues long: Spermidine/putrescine import ATP-binding protein PotA (327 aa).

The ABC transporter domain occupies 5 to 235 (IKVEAVEKHF…PKTLFVATFI (231 aa)). Position 37–44 (37–44 (GPSGCGKT)) interacts with ATP.

Belongs to the ABC transporter superfamily. Spermidine/putrescine importer (TC 3.A.1.11.1) family. As to quaternary structure, the complex is composed of two ATP-binding proteins (PotA), two transmembrane proteins (PotB and PotC) and a solute-binding protein (PotD).

Its subcellular location is the cell membrane. It catalyses the reaction ATP + H2O + polyamine-[polyamine-binding protein]Side 1 = ADP + phosphate + polyamineSide 2 + [polyamine-binding protein]Side 1.. In terms of biological role, part of the ABC transporter complex PotABCD involved in spermidine/putrescine import. Responsible for energy coupling to the transport system. The protein is Spermidine/putrescine import ATP-binding protein PotA of Bacillus cereus (strain ATCC 14579 / DSM 31 / CCUG 7414 / JCM 2152 / NBRC 15305 / NCIMB 9373 / NCTC 2599 / NRRL B-3711).